The following is a 487-amino-acid chain: WRKY transcription factor 1 (487 aa).

The disordered stretch occupies residues 69–104 (QSEVDVASPVSEKAPKVSESSGALSLQSGSEGNSPF). Phosphoserine is present on Ser-76. Positions 86–101 (SESSGALSLQSGSEGN) are enriched in polar residues. The segment at residues 105 to 169 (IREKVMEDGY…YFGEHDHPKP (65 aa)) is a DNA-binding region (WRKY 1). Zn(2+)-binding residues include Cys-136, Cys-141, His-164, and His-166. The segment at 255–287 (SSRITGDNTHKDYNSPTAKRRKKGGNIELSPVE) is disordered. A Nuclear localization signal motif is present at residues 273–277 (KRRKK). The WRKY 2 DNA-binding region spans 301 to 366 (TLFDIVNDGY…YEGKHDHDMP (66 aa)). Residues Cys-332, Cys-337, His-361, and His-363 each coordinate Zn(2+). The segment at 380–487 (EVDDKEGDAN…QKPKTEPAQS (108 aa)) is disordered. The segment covering 390–401 (KTPQSSTLQSIT) has biased composition (polar residues). 2 stretches are compositionally biased toward basic and acidic residues: residues 429-462 (LDEKLKEEIKERSDANKDHAANHAKPEAKSDDKT) and 476-487 (EEQKPKTEPAQS).

This sequence belongs to the WRKY group I family. In terms of tissue distribution, expressed to similar levels in root and flower, to a somewhat lower level in stem and to low levels in leaf and siliques.

It localises to the nucleus. Functionally, transcription factor. Binds to a 5'-CGTTGACCGAG-3' consensus core sequence which contains a W box, a frequently occurring elicitor-responsive cis-acting element. The protein is WRKY transcription factor 1 of Arabidopsis thaliana (Mouse-ear cress).